A 624-amino-acid chain; its full sequence is DNA mismatch repair protein MutL (624 aa).

The segment at 360-396 (GGNHFSQPAPRRETASTEPAVARERAPQPAYHSGSGY) is disordered. The segment covering 369 to 385 (PRRETASTEPAVARERA) has biased composition (basic and acidic residues).

The protein belongs to the DNA mismatch repair MutL/HexB family.

In terms of biological role, this protein is involved in the repair of mismatches in DNA. It is required for dam-dependent methyl-directed DNA mismatch repair. May act as a 'molecular matchmaker', a protein that promotes the formation of a stable complex between two or more DNA-binding proteins in an ATP-dependent manner without itself being part of a final effector complex. The polypeptide is DNA mismatch repair protein MutL (Serratia proteamaculans (strain 568)).